Reading from the N-terminus, the 149-residue chain is Large ribosomal subunit protein uL15 (149 aa).

A disordered region spans residues 14–63 (ASRKRVGRGSGSGLGCTSGKGNKGQNARAGGGVRPGFEGGQMPLQRRLPK). 2 stretches are compositionally biased toward gly residues: residues 21–35 (RGSG…GKGN) and 42–52 (AGGGVRPGFEG).

This sequence belongs to the universal ribosomal protein uL15 family. In terms of assembly, part of the 50S ribosomal subunit.

Binds to the 23S rRNA. In Nitratidesulfovibrio vulgaris (strain DSM 19637 / Miyazaki F) (Desulfovibrio vulgaris), this protein is Large ribosomal subunit protein uL15.